We begin with the raw amino-acid sequence, 449 residues long: MSEIVVSKFGGTSVADFDAMNRSADIVLSDANVRLVVLSASAGITNLLVALAEGLEPGERFEKLDAIRNIQFAILERLRYPNVIREEIERLLENITVLAEAAALATSPALTDELVSHGELMSTLLFVEILRERDVQAQWFDVRKVMRTNDRFGRAEPDIAALAELAALQLLPRLNEGLVITQGFIGSENKGRTTTLGRGGSDYTAALLAEALHASRVDIWTDVPGIYTTDPRVVSAAKRIDEIAFAEAAEMATFGAKVLHPATLLPAVRSDIPVFVGSSKDPRAGGTLVCNKTENPPLFRALALRRNQTLLTLHSLNMLHSRGFLAEVFGILARHNISVDLITTSEVSVALTLDTTGSTSTGDTLLTQSLLMELSALCRVEVEEGLALVALIGNDLSKACGVGKEVFGVLEPFNIRMICYGASSHNLCFLVPGEDAEQVVQKLHSNLFE.

The tract at residues 2-245 (SEIVVSKFGG…AAKRIDEIAF (244 aa)) is aspartokinase. 8–11 (KFGG) contacts ATP. Residues Thr-45, Glu-119, and 198-201 (RGGS) contribute to the substrate site. ATP is bound by residues 221–222 (TD), Tyr-227, Arg-232, and 257–258 (KV). Residues 246 to 449 (AEAAEMATFG…VQKLHSNLFE (204 aa)) form an interface region. Residues 299–449 (FRALALRRNQ…VQKLHSNLFE (151 aa)) are required for homodimerization. One can recognise an ACT domain in the interval 313-394 (LHSLNMLHSR…GLALVALIGN (82 aa)). Residues Met-318, Ser-321, 324–325 (FL), 338–340 (SVD), and 345–346 (SE) contribute to the L-lysine site.

This sequence belongs to the aspartokinase family. In terms of assembly, homodimer. In the inactive form a homotetramer is formed.

It catalyses the reaction L-aspartate + ATP = 4-phospho-L-aspartate + ADP. Its pathway is amino-acid biosynthesis; L-lysine biosynthesis via DAP pathway; (S)-tetrahydrodipicolinate from L-aspartate: step 1/4. With respect to regulation, synthesis and activity are sensitive to the allosteric inhibitor lysine, one of the end metabolites of the aspartic acid family branched pathway. The protein is Lysine-sensitive aspartokinase 3 (lysC) of Escherichia coli (strain K12).